The sequence spans 362 residues: MDNFLNDSKLMEDCKSRQWLLSGESPAISSVMFSAGVLGNLIALALLARRWRGDTGCSAGSRTSISLFHVLVTELVLTDLLGTCLISPVVLASYSRNQTLVALAPESHACTYFAFTMTFFSLATMLMLFAMALERYLSIGYPYFYRRHLSRRGGLAVLPVIYGASLLFCSLPLLNYGEYVQYCPGTWCFIRHGRTAYLQLYATMLLLLIVAVLACNISVILNLIRMHRRSRRSRCGLSGSSLRGPGSRRRGERTSMAEETDHLILLAIMTITFAICSLPFTIFAYMDETSSLKEKWDLRALRFLSVNSIIDPWVFAILRPPVLRLMRSVLCCRTSLRTQEAQQTSCSTQSSASKQTDLCGQL.

The Extracellular segment spans residues 1 to 24 (MDNFLNDSKLMEDCKSRQWLLSGE). A glycan (N-linked (GlcNAc...) asparagine) is linked at Asn6. A helical transmembrane segment spans residues 25–48 (SPAISSVMFSAGVLGNLIALALLA). Residues 49 to 66 (RRWRGDTGCSAGSRTSIS) are Cytoplasmic-facing. A helical membrane pass occupies residues 67 to 92 (LFHVLVTELVLTDLLGTCLISPVVLA). Over 93-112 (SYSRNQTLVALAPESHACTY) the chain is Extracellular. A disulfide bridge connects residues Cys110 and Cys188. Residues 113–133 (FAFTMTFFSLATMLMLFAMAL) form a helical membrane-spanning segment. Over 134-152 (ERYLSIGYPYFYRRHLSRR) the chain is Cytoplasmic. The chain crosses the membrane as a helical span at residues 153–177 (GGLAVLPVIYGASLLFCSLPLLNYG). Residues 178 to 199 (EYVQYCPGTWCFIRHGRTAYLQ) lie on the Extracellular side of the membrane. The helical transmembrane segment at 200-224 (LYATMLLLLIVAVLACNISVILNLI) threads the bilayer. Residues 225–262 (RMHRRSRRSRCGLSGSSLRGPGSRRRGERTSMAEETDH) lie on the Cytoplasmic side of the membrane. The interval 234–255 (RCGLSGSSLRGPGSRRRGERTS) is disordered. Over residues 235-245 (CGLSGSSLRGP) the composition is skewed to low complexity. The chain crosses the membrane as a helical span at residues 263 to 286 (LILLAIMTITFAICSLPFTIFAYM). The Extracellular segment spans residues 287 to 299 (DETSSLKEKWDLR). A helical membrane pass occupies residues 300 to 323 (ALRFLSVNSIIDPWVFAILRPPVL). Residues 324–362 (RLMRSVLCCRTSLRTQEAQQTSCSTQSSASKQTDLCGQL) lie on the Cytoplasmic side of the membrane.

Belongs to the G-protein coupled receptor 1 family.

The protein resides in the cell membrane. Its function is as follows. Receptor for prostaglandin E2 (PGE2). The activity of this receptor is mediated by G(s) proteins that stimulate adenylate cyclase. The subsequent raise in intracellular cAMP is responsible for the relaxing effect of this receptor on smooth muscle. The polypeptide is Prostaglandin E2 receptor EP2 subtype (Ptger2) (Mus musculus (Mouse)).